Reading from the N-terminus, the 268-residue chain is 3-methyl-2-oxobutanoate hydroxymethyltransferase (268 aa).

Positions 46 and 85 each coordinate Mg(2+). Residues 46 to 47 (DS), aspartate 85, and lysine 114 each bind 3-methyl-2-oxobutanoate. Glutamate 116 serves as a coordination point for Mg(2+). The Proton acceptor role is filled by glutamate 183.

Belongs to the PanB family. In terms of assembly, homodecamer; pentamer of dimers. It depends on Mg(2+) as a cofactor.

Its subcellular location is the cytoplasm. It carries out the reaction 3-methyl-2-oxobutanoate + (6R)-5,10-methylene-5,6,7,8-tetrahydrofolate + H2O = 2-dehydropantoate + (6S)-5,6,7,8-tetrahydrofolate. Its pathway is cofactor biosynthesis; coenzyme A biosynthesis. In terms of biological role, catalyzes the reversible reaction in which hydroxymethyl group from 5,10-methylenetetrahydrofolate is transferred onto alpha-ketoisovalerate to form ketopantoate. The sequence is that of 3-methyl-2-oxobutanoate hydroxymethyltransferase from Sulfolobus acidocaldarius (strain ATCC 33909 / DSM 639 / JCM 8929 / NBRC 15157 / NCIMB 11770).